We begin with the raw amino-acid sequence, 70 residues long: ATP synthase subunit epsilon, mitochondrial (70 aa).

This sequence belongs to the eukaryotic ATPase epsilon family. In terms of assembly, F-type ATPases have 2 components, CF(1) - the catalytic core - and CF(0) - the membrane proton channel. CF(1) has five subunits: alpha(3), beta(3), gamma(1), delta(1), epsilon(1). CF(0) has three main subunits: a, b and c.

Its subcellular location is the mitochondrion. It localises to the mitochondrion inner membrane. In terms of biological role, mitochondrial membrane ATP synthase (F(1)F(0) ATP synthase or Complex V) produces ATP from ADP in the presence of a proton gradient across the membrane which is generated by electron transport complexes of the respiratory chain. F-type ATPases consist of two structural domains, F(1) - containing the extramembraneous catalytic core, and F(0) - containing the membrane proton channel, linked together by a central stalk and a peripheral stalk. During catalysis, ATP synthesis in the catalytic domain of F(1) is coupled via a rotary mechanism of the central stalk subunits to proton translocation. Part of the complex F(1) domain and of the central stalk which is part of the complex rotary element. Rotation of the central stalk against the surrounding alpha(3)beta(3) subunits leads to hydrolysis of ATP in three separate catalytic sites on the beta subunits. The polypeptide is ATP synthase subunit epsilon, mitochondrial (Zea mays (Maize)).